Consider the following 55-residue polypeptide: Large ribosomal subunit protein bL33A (55 aa).

Belongs to the bacterial ribosomal protein bL33 family.

The chain is Large ribosomal subunit protein bL33A from Mycobacterium ulcerans (strain Agy99).